We begin with the raw amino-acid sequence, 359 residues long: Small ribosomal subunit biogenesis GTPase RsgA (359 aa).

Residues 101–259 (KRKGSQAIAS…LMDNPGIREV (159 aa)) enclose the CP-type G domain. Residues 149 to 152 (NKKD) and 201 to 209 (GSSGAGKST) each bind GTP. Zn(2+)-binding residues include C284, C289, H291, and C297. Residues 331–359 (DPEEARKKKQKDKQMSKALQKRLKDKGRK) form a disordered region. The span at 349 to 359 (LQKRLKDKGRK) shows a compositional bias: basic residues.

This sequence belongs to the TRAFAC class YlqF/YawG GTPase family. RsgA subfamily. As to quaternary structure, monomer. Associates with 30S ribosomal subunit, binds 16S rRNA. The cofactor is Zn(2+).

It localises to the cytoplasm. In terms of biological role, one of several proteins that assist in the late maturation steps of the functional core of the 30S ribosomal subunit. Helps release RbfA from mature subunits. May play a role in the assembly of ribosomal proteins into the subunit. Circularly permuted GTPase that catalyzes slow GTP hydrolysis, GTPase activity is stimulated by the 30S ribosomal subunit. The chain is Small ribosomal subunit biogenesis GTPase RsgA from Leptospira interrogans serogroup Icterohaemorrhagiae serovar copenhageni (strain Fiocruz L1-130).